The primary structure comprises 256 residues: MPLLPMTKLELGHRGEAWEPGCLRAVAGELLFTFLFVFIGVASTITAGKAAGGAGEAAAVTAAAMAQALVVAVLATAGFHVSGGHLNPAVTLSLAVGGHITLFRSALYVAAQLAGSSLACLLLRCLTGGAATPVHALADGVGPVQGVAAEAVFTFTLLLVICATILDPRRAAPPGTGPLLTGLLVGANTVAGGALTGASMNPARSFGPALATGEWAHHWVYWVGPLAGGPLAVVAYELLFMDVEDAGGAHQPLPQE.

5 consecutive transmembrane segments (helical) span residues 25 to 45 (AVAG…ASTI), 59 to 79 (AVTA…TAGF), 86 to 108 (LNPA…SALY), 146 to 166 (GVAA…ATIL), and 178 to 198 (PLLT…LTGA). Positions 87–89 (NPA) match the NPA 1 motif. The short motif at 201–203 (NPA) is the NPA 2 element. Residues 220 to 240 (VYWVGPLAGGPLAVVAYELLF) form a helical membrane-spanning segment.

This sequence belongs to the MIP/aquaporin (TC 1.A.8) family. TIP (TC 1.A.8.10) subfamily. In terms of tissue distribution, expressed in roots, leaves and anthers.

The protein localises to the vacuole membrane. Functionally, aquaporins facilitate the transport of water and small neutral solutes across cell membranes. May be involved in transport from the vacuolar compartment to the cytoplasm. This is Probable aquaporin TIP4-2 (TIP4-2) from Oryza sativa subsp. japonica (Rice).